We begin with the raw amino-acid sequence, 2157 residues long: Genome polyprotein (2157 aa).

A lipid anchor (N-myristoyl glycine; by host) is attached at Gly-2. Topologically, residues 2–1470 (GAQVSRQNVG…DLNIANSIIA (1469 aa)) are cytoplasmic. The interval 567–584 (PIEQNPVENYIDEVLNEV) is amphipathic alpha-helix. Active-site for protease 2A activity residues include His-875 and Asp-892. Residues Cys-909 and Cys-911 each contribute to the Zn(2+) site. Cys-963 functions as the For protease 2A activity in the catalytic mechanism. Zn(2+) is bound by residues Cys-969 and His-971. Residues 1095–1164 (SDSWLKKFTE…NLRAADSATQ (70 aa)) are membrane-binding. The oligomerization stretch occupies residues 1095–1228 (SDSWLKKFTE…PPGTGKSITT (134 aa)). The tract at residues 1116–1120 (GNKIS) is RNA-binding. An SF3 helicase domain is found at 1188 to 1350 (EAKRIKVLYN…YKDTQGKLDV (163 aa)). Positions 1357, 1368, and 1373 each coordinate Zn(2+). The C4-type; degenerate zinc finger occupies 1357-1373 (CNVNTKIGNAKCCPFVC). The RNA-binding stretch occupies residues 1400-1407 (EDKRRRQV). An oligomerization region spans residues 1411 to 1416 (MSAIFQ). Residues 1471–1486 (IIANIISIAGIIFVIY) lie within the membrane without spanning it. Residues 1487–2157 (KLFCSLQGPY…LLKHEWYEKF (671 aa)) lie on the Cytoplasmic side of the membrane. At Tyr-1496 the chain carries O-(5'-phospho-RNA)-tyrosine. The Peptidase C3 domain occupies 1515 to 1693 (GPEEEFGRSI…FSAMLLRSYF (179 aa)). Residues His-1554, Glu-1585, and Cys-1661 each act as for protease 3C activity in the active site. Residues 1925–2038 (DCIMAFDYTN…SYKYTLDMEA (114 aa)) form the RdRp catalytic domain. Mg(2+) is bound by residues Asp-1931 and Asp-2024.

It belongs to the picornaviruses polyprotein family. In terms of assembly, interacts with capsid protein VP1 and capsid protein VP3 to form heterotrimeric protomers. As to quaternary structure, interacts with capsid protein VP0, and capsid protein VP3 to form heterotrimeric protomers. Five protomers subsequently associate to form pentamers which serve as building blocks for the capsid. Interacts with capsid protein VP2, capsid protein VP3 and capsid protein VP4 following cleavage of capsid protein VP0. Interacts with capsid protein VP1 and capsid protein VP3 in the mature capsid. In terms of assembly, interacts with capsid protein VP0 and capsid protein VP1 to form heterotrimeric protomers. Five protomers subsequently associate to form pentamers which serve as building blocks for the capsid. Interacts with capsid protein VP4 in the mature capsid. Interacts with protein 2C; this interaction may be important for virion morphogenesis. As to quaternary structure, interacts with capsid protein VP1 and capsid protein VP3. Homodimer. In terms of assembly, homohexamer; forms a hexameric ring structure with 6-fold symmetry characteristic of AAA+ ATPases. Interacts (via N-terminus) with host RTN3 (via reticulon domain); this interaction is important for viral replication. Interacts with capsid protein VP3; this interaction may be important for virion morphogenesis. As to quaternary structure, interacts with protein 3CD. Homodimer. Interacts with host GBF1. Interacts (via GOLD domain) with host ACBD3 (via GOLD domain); this interaction allows the formation of a viral protein 3A/ACBD3 heterotetramer with a 2:2 stoichiometry, which will stimulate the recruitment of host PI4KB in order to synthesize PI4P at the viral RNA replication sites. In terms of assembly, interacts with RNA-directed RNA polymerase. As to quaternary structure, interacts with protein 3AB and with RNA-directed RNA polymerase. Interacts with Viral protein genome-linked and with protein 3CD. Mg(2+) is required as a cofactor. Specific enzymatic cleavages in vivo by the viral proteases yield processing intermediates and the mature proteins. In terms of processing, myristoylation is required for the formation of pentamers during virus assembly. Further assembly of 12 pentamers and a molecule of genomic RNA generates the provirion. Post-translationally, during virion maturation, immature virions are rendered infectious following cleavage of VP0 into VP4 and VP2. This maturation seems to be an autocatalytic event triggered by the presence of RNA in the capsid and it is followed by a conformational change infectious virion. Myristoylation is required during RNA encapsidation and formation of the mature virus particle. In terms of processing, VPg is uridylylated by the polymerase into VPg-pUpU. This acts as a nucleotide-peptide primer for the genomic RNA replication.

Its subcellular location is the virion. It is found in the host cytoplasm. It localises to the host cytoplasmic vesicle membrane. The protein localises to the host nucleus. The enzyme catalyses a ribonucleoside 5'-triphosphate + H2O = a ribonucleoside 5'-diphosphate + phosphate + H(+). It catalyses the reaction Selective cleavage of Tyr-|-Gly bond in the picornavirus polyprotein.. The catalysed reaction is RNA(n) + a ribonucleoside 5'-triphosphate = RNA(n+1) + diphosphate. It carries out the reaction Selective cleavage of Gln-|-Gly bond in the poliovirus polyprotein. In other picornavirus reactions Glu may be substituted for Gln, and Ser or Thr for Gly.. Replication or transcription is subject to high level of random mutations by the nucleotide analog ribavirin. In terms of biological role, forms an icosahedral capsid of pseudo T=3 symmetry with capsid proteins VP2 and VP3. The capsid is 300 Angstroms in diameter, composed of 60 copies of each capsid protein and enclosing the viral positive strand RNA genome. Capsid protein VP1 mainly forms the vertices of the capsid. Capsid protein VP1 interacts with host cell receptor to provide virion attachment to target host cells. This attachment induces virion internalization. Tyrosine kinases are probably involved in the entry process. After binding to its receptor, the capsid undergoes conformational changes. Capsid protein VP1 N-terminus (that contains an amphipathic alpha-helix) and capsid protein VP4 are externalized. Together, they shape a pore in the host membrane through which viral genome is translocated to host cell cytoplasm. Its function is as follows. Forms an icosahedral capsid of pseudo T=3 symmetry with capsid proteins VP2 and VP3. The capsid is 300 Angstroms in diameter, composed of 60 copies of each capsid protein and enclosing the viral positive strand RNA genome. Lies on the inner surface of the capsid shell. After binding to the host receptor, the capsid undergoes conformational changes. Capsid protein VP4 is released, Capsid protein VP1 N-terminus is externalized, and together, they shape a pore in the host membrane through which the viral genome is translocated into the host cell cytoplasm. Functionally, component of immature procapsids, which is cleaved into capsid proteins VP4 and VP2 after maturation. Allows the capsid to remain inactive before the maturation step. In terms of biological role, cysteine protease that cleaves viral polyprotein and specific host proteins. It is responsible for the autocatalytic cleavage between the P1 and P2 regions, which is the first cleavage occurring in the polyprotein. Also cleaves the host translation initiation factor EIF4G1, in order to shut down the capped cellular mRNA translation. Inhibits the host nucleus-cytoplasm protein and RNA trafficking by cleaving host members of the nuclear pores. Counteracts stress granule formation probably by antagonizing its assembly or promoting its dissassembly. Its function is as follows. Plays an essential role in the virus replication cycle by acting as a viroporin. Creates a pore in the host endoplasmic reticulum and as a consequence releases Ca2+ in the cytoplasm of infected cell. In turn, high levels of cytoplasmic calcium may trigger membrane trafficking and transport of viral ER-associated proteins to viroplasms, sites of viral genome replication. Induces and associates with structural rearrangements of intracellular membranes. Displays RNA-binding, nucleotide binding and NTPase activities. May play a role in virion morphogenesis and viral RNA encapsidation by interacting with the capsid protein VP3. Functionally, localizes the viral replication complex to the surface of membranous vesicles. Together with protein 3CD binds the Cis-Active RNA Element (CRE) which is involved in RNA synthesis initiation. Acts as a cofactor to stimulate the activity of 3D polymerase, maybe through a nucleid acid chaperone activity. In terms of biological role, localizes the viral replication complex to the surface of membranous vesicles. It inhibits host cell endoplasmic reticulum-to-Golgi apparatus transport and causes the disassembly of the Golgi complex, possibly through GBF1 interaction. This would result in depletion of MHC, trail receptors and IFN receptors at the host cell surface. Plays an essential role in viral RNA replication by recruiting ACBD3 and PI4KB at the viral replication sites, thereby allowing the formation of the rearranged membranous structures where viral replication takes place. Its function is as follows. Acts as a primer for viral RNA replication and remains covalently bound to viral genomic RNA. VPg is uridylylated prior to priming replication into VPg-pUpU. The oriI viral genomic sequence may act as a template for this. The VPg-pUpU is then used as primer on the genomic RNA poly(A) by the RNA-dependent RNA polymerase to replicate the viral genome. During genome replication, the VPg-RNA linkage is removed by the host TDP2, thereby accelerating replication. During the late stage of the replication cycle, host TDP2 is excluded from sites of viral RNA synthesis and encapsidation, allowing for the generation of progeny virions. Involved in the viral replication complex and viral polypeptide maturation. It exhibits protease activity with a specificity and catalytic efficiency that is different from protease 3C. Protein 3CD lacks polymerase activity. Protein 3CD binds to the 5'UTR of the viral genome. Functionally, major viral protease that mediates proteolytic processing of the polyprotein. Cleaves host EIF5B, contributing to host translation shutoff. Also cleaves host PABPC1, contributing to host translation shutoff. In terms of biological role, replicates the viral genomic RNA on the surface of intracellular membranes. May form linear arrays of subunits that propagate along a strong head-to-tail interaction called interface-I. Covalently attaches UMP to a tyrosine of VPg, which is used to prime RNA synthesis. The positive stranded RNA genome is first replicated at virus induced membranous vesicles, creating a dsRNA genomic replication form. This dsRNA is then used as template to synthesize positive stranded RNA genomes. ss(+)RNA genomes are either translated, replicated or encapsidated. The sequence is that of Genome polyprotein from Homo sapiens (Human).